A 386-amino-acid polypeptide reads, in one-letter code: AT-hook motif nuclear-localized protein 8 (386 aa).

Disordered stretches follow at residues 1 to 175 (MDSR…LGGT) and 303 to 372 (KQSS…LHPH). The span at 54–70 (QQQSQTFHQQQQQQMDQ) shows a compositional bias: low complexity. The segment covering 101-110 (VKKKRGRPRK) has biased composition (basic residues). Residues 102–110 (KKKRGRPRK) carry the Bipartite nuclear localization signal motif. Positions 102 to 114 (KKKRGRPRKYTPD) form a DNA-binding region, a.T hook 1. Residues 126–135 (PLLSAASNSY) show a composition bias toward polar residues. Positions 136 to 147 (GEGGVGDSGGNG) are enriched in gly residues. A DNA-binding region (a.T hook 2) is located at residues 155 to 167 (KRNRGRPPGSSKK). Residues 174–316 (GTSGVGFTPH…VNIARGQNPE (143 aa)) enclose the PPC domain. Composition is skewed to low complexity over residues 328 to 337 (GSVSQGPSSE) and 361 to 372 (QQQQQQQPLHPH).

It localises to the nucleus. Functionally, transcription factor that specifically binds AT-rich DNA sequences related to the nuclear matrix attachment regions (MARs). The sequence is that of AT-hook motif nuclear-localized protein 8 from Arabidopsis thaliana (Mouse-ear cress).